The primary structure comprises 105 residues: MARSVSSFKLLGASIFDGLYVSISRRGYSGAPPAAVTASFGRPGAMGKVERRDAMKESSSSETRAYSSAWAPDPVTGYYRPENCGAEIDAAELREMLLNHRVRSQ.

Residues 48–67 (KVERRDAMKESSSSETRAYS) form a disordered region. Positions 57–67 (ESSSSETRAYS) are enriched in low complexity.

This sequence belongs to the LEA type 3 family.

The chain is Late embryogenesis abundant protein Lea5-D (LEA5-D) from Gossypium hirsutum (Upland cotton).